A 383-amino-acid chain; its full sequence is Lipoyl synthase, mitochondrial (383 aa).

The N-terminal 19 residues, 1–19 (MHASTLTRCMRVAQNARCL), are a transit peptide targeting the mitochondrion. The disordered stretch occupies residues 69-97 (DAAPGTKPSRKPNASNRKPKWLKAQPTQG). The [4Fe-4S] cluster site is built by C116, C121, C127, C147, C151, C154, and S362. The 220-residue stretch at 132–351 (KDGIATATIM…QKVAEQMGFL (220 aa)) folds into the Radical SAM core domain.

This sequence belongs to the radical SAM superfamily. Lipoyl synthase family. It depends on [4Fe-4S] cluster as a cofactor.

It is found in the mitochondrion. The enzyme catalyses [[Fe-S] cluster scaffold protein carrying a second [4Fe-4S](2+) cluster] + N(6)-octanoyl-L-lysyl-[protein] + 2 oxidized [2Fe-2S]-[ferredoxin] + 2 S-adenosyl-L-methionine + 4 H(+) = [[Fe-S] cluster scaffold protein] + N(6)-[(R)-dihydrolipoyl]-L-lysyl-[protein] + 4 Fe(3+) + 2 hydrogen sulfide + 2 5'-deoxyadenosine + 2 L-methionine + 2 reduced [2Fe-2S]-[ferredoxin]. The protein operates within protein modification; protein lipoylation via endogenous pathway; protein N(6)-(lipoyl)lysine from octanoyl-[acyl-carrier-protein]: step 2/2. Catalyzes the radical-mediated insertion of two sulfur atoms into the C-6 and C-8 positions of the octanoyl moiety bound to the lipoyl domains of lipoate-dependent enzymes, thereby converting the octanoylated domains into lipoylated derivatives. This chain is Lipoyl synthase, mitochondrial, found in Phytophthora infestans (strain T30-4) (Potato late blight agent).